A 370-amino-acid polypeptide reads, in one-letter code: Flagellar P-ring protein (370 aa).

The N-terminal stretch at 1–24 (MTLSKWILSFGLSVCLIVSHPVSA) is a signal peptide.

It belongs to the FlgI family. The basal body constitutes a major portion of the flagellar organelle and consists of four rings (L,P,S, and M) mounted on a central rod.

It is found in the periplasm. Its subcellular location is the bacterial flagellum basal body. In terms of biological role, assembles around the rod to form the L-ring and probably protects the motor/basal body from shearing forces during rotation. This Nitrosomonas europaea (strain ATCC 19718 / CIP 103999 / KCTC 2705 / NBRC 14298) protein is Flagellar P-ring protein.